The primary structure comprises 132 residues: ATP synthase epsilon chain (132 aa).

The protein belongs to the ATPase epsilon chain family. As to quaternary structure, F-type ATPases have 2 components, CF(1) - the catalytic core - and CF(0) - the membrane proton channel. CF(1) has five subunits: alpha(3), beta(3), gamma(1), delta(1), epsilon(1). CF(0) has three main subunits: a, b and c.

Its subcellular location is the cell inner membrane. In terms of biological role, produces ATP from ADP in the presence of a proton gradient across the membrane. The chain is ATP synthase epsilon chain from Gloeobacter violaceus (strain ATCC 29082 / PCC 7421).